The sequence spans 485 residues: Probable glycine dehydrogenase (decarboxylating) subunit 2 (485 aa).

K273 carries the post-translational modification N6-(pyridoxal phosphate)lysine.

This sequence belongs to the GcvP family. C-terminal subunit subfamily. In terms of assembly, the glycine cleavage system is composed of four proteins: P, T, L and H. In this organism, the P 'protein' is a heterodimer of two subunits. Pyridoxal 5'-phosphate serves as cofactor.

The catalysed reaction is N(6)-[(R)-lipoyl]-L-lysyl-[glycine-cleavage complex H protein] + glycine + H(+) = N(6)-[(R)-S(8)-aminomethyldihydrolipoyl]-L-lysyl-[glycine-cleavage complex H protein] + CO2. The glycine cleavage system catalyzes the degradation of glycine. The P protein binds the alpha-amino group of glycine through its pyridoxal phosphate cofactor; CO(2) is released and the remaining methylamine moiety is then transferred to the lipoamide cofactor of the H protein. The polypeptide is Probable glycine dehydrogenase (decarboxylating) subunit 2 (Caldanaerobacter subterraneus subsp. tengcongensis (strain DSM 15242 / JCM 11007 / NBRC 100824 / MB4) (Thermoanaerobacter tengcongensis)).